The following is a 787-amino-acid chain: MAAARPARGPELPLLGLLLLLLLGDPGRGAASSGNATGPGPRSAGGSARRSAAVTGPPPPLSHCGRAAPCEPLRYNVCLGSVLPYGATSTLLAGDSDSQEEAHGKLVLWSGLRNAPRCWAVIQPLLCAVYMPKCENDRVELPSRTLCQATRGPCAIVERERGWPDFLRCTPDRFPEGCTNEVQNIKFNSSGQCEVPLVRTDNPKSWYEDVEGCGIQCQNPLFTEAEHQDMHSYIAAFGAVTGLCTLFTLATFVADWRNSNRYPAVILFYVNACFFVGSIGWLAQFMDGARREIVCRADGTMRLGEPTSNETLSCVIIFVIVYYALMAGVVWFVVLTYAWHTSFKALGTTYQPLSGKTSYFHLLTWSLPFVLTVAILAVAQVDGDSVSGICFVGYKNYRYRAGFVLAPIGLVLIVGGYFLIRGVMTLFSIKSNHPGLLSEKAASKINETMLRLGIFGFLAFGFVLITFSCHFYDFFNQAEWERSFRDYVLCQANVTIGLPTKQPIPDCEIKNRPSLLVEKINLFAMFGTGIAMSTWVWTKATLLIWRRTWCRLTGQSDDEPKRIKKSKMIAKAFSKRHELLQNPGQELSFSMHTVSHDGPVAGLAFDLNEPSADVSSAWAQHVTKMVARRGAILPQDISVTPVATPVPPEEQANLWLVEAEISPELQKRLGRKKKRRKRKKEVCPLAPPPELHPPAPAPSTIPRLPQLPRQKCLVAAGAWGAGDSCRQGAWTLVSNPFCPEPSPPQDPFLPSAPAPVAWAHGRRQGLGPIHSRTNLMDTELMDADSDF.

The first 27 residues, 1–27, serve as a signal peptide directing secretion; sequence MAAARPARGPELPLLGLLLLLLLGDPG. The Extracellular segment spans residues 28–233; it reads RGAASSGNAT…EAEHQDMHSY (206 aa). The tract at residues 30–60 is disordered; that stretch reads AASSGNATGPGPRSAGGSARRSAAVTGPPPP. The N-linked (GlcNAc...) asparagine glycan is linked to N35. Positions 38-53 are enriched in low complexity; it reads GPGPRSAGGSARRSAA. Cystine bridges form between C64–C178, C70–C134, C78–C127, C118–C154, and C147–C169. The FZ domain maps to 65-181; the sequence is GRAAPCEPLR…DRFPEGCTNE (117 aa). Cholesterol is bound at residue D95. N188 carries an N-linked (GlcNAc...) asparagine glycan. Cystine bridges form between C193-C213 and C217-C295. The helical transmembrane segment at 234 to 254 threads the bilayer; sequence IAAFGAVTGLCTLFTLATFVA. The Cytoplasmic segment spans residues 255–262; that stretch reads DWRNSNRY. A helical membrane pass occupies residues 263-283; sequence PAVILFYVNACFFVGSIGWLA. The Extracellular portion of the chain corresponds to 284 to 314; sequence QFMDGARREIVCRADGTMRLGEPTSNETLSC. A glycan (N-linked (GlcNAc...) asparagine) is linked at N309. A disulfide bond links C314 and C390. The helical transmembrane segment at 315–335 threads the bilayer; the sequence is VIIFVIVYYALMAGVVWFVVL. Residues 336–358 lie on the Cytoplasmic side of the membrane; the sequence is TYAWHTSFKALGTTYQPLSGKTS. Residues 359–379 traverse the membrane as a helical segment; the sequence is YFHLLTWSLPFVLTVAILAVA. Topologically, residues 380–402 are extracellular; that stretch reads QVDGDSVSGICFVGYKNYRYRAG. Y394 serves as a coordination point for cholesterol. A helical transmembrane segment spans residues 403-423; that stretch reads FVLAPIGLVLIVGGYFLIRGV. The Cytoplasmic portion of the chain corresponds to 424–451; the sequence is MTLFSIKSNHPGLLSEKAASKINETMLR. The helical transmembrane segment at 452–472 threads the bilayer; sequence LGIFGFLAFGFVLITFSCHFY. At 473–524 the chain is on the extracellular side; it reads DFFNQAEWERSFRDYVLCQANVTIGLPTKQPIPDCEIKNRPSLLVEKINLFA. Residues C490 and C507 are joined by a disulfide bond. The helical transmembrane segment at 525-545 threads the bilayer; sequence MFGTGIAMSTWVWTKATLLIW. Positions 538–569 are interaction with BBS5 and BBS7; the sequence is TKATLLIWRRTWCRLTGQSDDEPKRIKKSKMI. Topologically, residues 546–787 are cytoplasmic; the sequence is RRTWCRLTGQ…TELMDADSDF (242 aa). Phosphoserine is present on residues S556, S574, and S590. A required for interaction with PRKACA region spans residues 570–653; it reads AKAFSKRHEL…TPVPPEEQAN (84 aa). An interaction with DLG5 region spans residues 581–593; sequence QNPGQELSFSMHT. The residue at position 593 (T593) is a Phosphothreonine. 2 positions are modified to phosphoserine: S595 and S638. Residues T640 and T644 each carry the phosphothreonine modification. S662 bears the Phosphoserine mark. A disordered region spans residues 667 to 704; the sequence is KRLGRKKKRRKRKKEVCPLAPPPELHPPAPAPSTIPRL. The span at 668-680 shows a compositional bias: basic residues; sequence RLGRKKKRRKRKK. Pro residues predominate over residues 685–699; the sequence is LAPPPELHPPAPAPS.

It belongs to the G-protein coupled receptor Fz/Smo family. As to quaternary structure, homodimer. Interacts (via C-terminus) with protein kinase A catalytic subunit PRKACA; interacts with free PRKACA subunits and the interaction leads to sequestration of PRKACA at the membrane, preventing PRKACA-mediated phosphorylation of GLI transcription factors. Interacts with ARRB2. Interacts with KIF7. Interacts with BBS5 and BBS7; the interactions are indicative for the association of SMO with the BBsome complex to facilitate ciliary localization of SMO. Interacts with DLG5 and SDCBP. Interacts with GAS8/DRC4. Post-translationally, phosphorylation by GRK kinases is required for interaction with protein kinase A catalytic subunit PRKACA.

The protein localises to the cell membrane. It localises to the cell projection. It is found in the cilium. In terms of biological role, g protein-coupled receptor which associates with the patched protein (PTCH) to transduce hedgehog protein signaling. Binding of sonic hedgehog (SHH) to its receptor patched prevents inhibition of smoothened (SMO) by patched. When active, SMO binds to and sequesters protein kinase A catalytic subunit PRKACA at the cell membrane, preventing PRKACA-mediated phosphorylation of GLI transcription factors which releases the GLI proteins from PRKACA-mediated inhibition and allows for transcriptional activation of hedgehog pathway target genes. Required for the accumulation of KIF7, GLI2 and GLI3 in the cilia. Interacts with DLG5 at the ciliary base to induce the accumulation of KIF7 and GLI2 at the ciliary tip for GLI2 activation. The protein is Protein smoothened (SMO) of Homo sapiens (Human).